Here is a 201-residue protein sequence, read N- to C-terminus: Nascent polypeptide-associated complex subunit alpha (201 aa).

Over residues 1–20 (MANPRVEELPDEEVKKTVVD) the composition is skewed to basic and acidic residues. 2 disordered regions span residues 1–51 (MANP…SRNE) and 118–165 (AQQL…IEDK). Over residues 21-36 (DHDDDSSSDSDGEEET) the composition is skewed to acidic residues. An NAC-A/B domain is found at 48–113 (SRNEKKARKA…AKIEDLNASA (66 aa)). Basic and acidic residues predominate over residues 126–149 (GHDHDHAGHSHGEAKASEGDAKKE). Acidic residues predominate over residues 150 to 161 (EEDDDEEVDADG). Residues 162-200 (IEDKDIELVMTQAGVSRTKAIKALKENDNDIVNSIMALS) form the UBA domain.

The protein belongs to the NAC-alpha family. Part of the nascent polypeptide-associated complex (NAC), consisting of EGD2 and EGD1. NAC associates with ribosomes via EGD1.

It is found in the cytoplasm. Its subcellular location is the nucleus. In terms of biological role, component of the nascent polypeptide-associated complex (NAC), a dynamic component of the ribosomal exit tunnel, protecting the emerging polypeptides from interaction with other cytoplasmic proteins to ensure appropriate nascent protein targeting. The NAC complex also promotes mitochondrial protein import by enhancing productive ribosome interactions with the outer mitochondrial membrane and blocks the inappropriate interaction of ribosomes translating non-secretory nascent polypeptides with translocation sites in the membrane of the endoplasmic reticulum. EGD2 may also be involved in transcription regulation. In Pyricularia oryzae (strain 70-15 / ATCC MYA-4617 / FGSC 8958) (Rice blast fungus), this protein is Nascent polypeptide-associated complex subunit alpha (EGD2).